Consider the following 434-residue polypeptide: tRNA dimethylallyltransferase (434 aa).

G10 to S17 provides a ligand contact to ATP. Position 12–17 (T12–S17) interacts with substrate. Interaction with substrate tRNA stretches follow at residues D35–Q38 and R166–R170. The segment at S211–E233 is interaction with isopentenylpyrophosphate transferase. 3 interaction with substrate tRNA regions span residues Q256–I258, R281–S299, and K291–Q298. The Matrin-type zinc finger occupies F380–R416.

Belongs to the IPP transferase family.

The protein localises to the mitochondrion. It is found in the cytoplasm. The protein resides in the nucleus. The catalysed reaction is adenosine(37) in tRNA + dimethylallyl diphosphate = N(6)-dimethylallyladenosine(37) in tRNA + diphosphate. In terms of biological role, catalyzes the transfer of a dimethylallyl group onto the adenine at position 37 of both cytosolic and mitochondrial tRNAs, leading to the formation of N6-(dimethylallyl)adenosine (i(6)A). The polypeptide is tRNA dimethylallyltransferase (tit1) (Schizosaccharomyces pombe (strain 972 / ATCC 24843) (Fission yeast)).